A 412-amino-acid chain; its full sequence is Flap endonuclease 1-B (412 aa).

Residues 1 to 105 (MGIKGLTKLL…KELAKRSLKR (105 aa)) are N-domain. Asp34 contributes to the Mg(2+) binding site. Arg71 lines the DNA pocket. 5 residues coordinate Mg(2+): Asp87, Glu159, Glu161, Asp180, and Asp182. The tract at residues 123 to 254 (LIEKFSKRTV…QRALKLIRQH (132 aa)) is I-domain. Glu159 is a DNA binding site. Gly232 and Asp234 together coordinate DNA. Asp234 lines the Mg(2+) pocket.

Belongs to the XPG/RAD2 endonuclease family. FEN1 subfamily. In terms of assembly, interacts with PCNA. Three molecules of FEN1 bind to one PCNA trimer with each molecule binding to one PCNA monomer. PCNA stimulates the nuclease activity without altering cleavage specificity. Mg(2+) is required as a cofactor. In terms of processing, phosphorylated. Phosphorylation upon DNA damage induces relocalization to the nuclear plasma.

Its subcellular location is the nucleus. The protein resides in the nucleolus. It is found in the nucleoplasm. It localises to the mitochondrion. Functionally, structure-specific nuclease with 5'-flap endonuclease and 5'-3' exonuclease activities involved in DNA replication and repair. During DNA replication, cleaves the 5'-overhanging flap structure that is generated by displacement synthesis when DNA polymerase encounters the 5'-end of a downstream Okazaki fragment. It enters the flap from the 5'-end and then tracks to cleave the flap base, leaving a nick for ligation. Also involved in the long patch base excision repair (LP-BER) pathway, by cleaving within the apurinic/apyrimidinic (AP) site-terminated flap. Acts as a genome stabilization factor that prevents flaps from equilibrating into structures that lead to duplications and deletions. Also possesses 5'-3' exonuclease activity on nicked or gapped double-stranded DNA, and exhibits RNase H activity. Also involved in replication and repair of rDNA and in repairing mitochondrial DNA. This chain is Flap endonuclease 1-B, found in Oryza sativa subsp. indica (Rice).